A 352-amino-acid chain; its full sequence is Strictosidine synthase (352 aa).

A signal peptide spans 1–31; sequence MANFSESKSMMAVFFMFFLLLLSSSSSSSSS. Asparagine 95 and asparagine 187 each carry an N-linked (GlcNAc...) asparagine glycan.

Belongs to the strictosidine synthase family. Monomer.

It is found in the vacuole. The catalysed reaction is 3alpha(S)-strictosidine + H2O = secologanin + tryptamine. It participates in alkaloid biosynthesis; 3alpha(S)-strictosidine biosynthesis; 3alpha(S)-strictosidine from secologanin and tryptamine: step 1/1. Its function is as follows. Catalyzes the stereospecific condensation of tryptamine with secologanin to form strictosidine, the key intermediate of indole alkaloid biosynthesis. This Catharanthus roseus (Madagascar periwinkle) protein is Strictosidine synthase (STR1).